The primary structure comprises 810 residues: MTEQRRSPNKRANKPPALSGLSSRTGRLPASALRPLVLAMAGLSVGAHAQMSSSAVPDIDQTESVVETAPEVPLAPPVSGELVPRLAEPAKTTQPGESPPAFVSGDRLTGYNERGVVLEGNAELRRGGAVVKGDKLTYDQDTDEAFAHGNARVSRGGALAVGPEARMKVEANEGYMLSPDYYFQQTGGTGKAERIDFIDKDRSVIKRATYTTCSPDNADWYFSARQLDLDSDREVGVAYGGVLHFFDVPIAGAPVFSFPLTDERRSGFLSPLFGYGSKSGLDVTLPYYFNIAPNRDLTLYPRIMTSRGFMLGGDYRYIGQGYSGRLRAEILPDDRQTNSNRWSYSFQHTQNLAKGLNAYLNLNRVSDDRYPDDLTRTVAQSTQRQYIQEGGVTYNWQDFTVLARVQKFQTLLPSGPSYEREPQLNGKYIRYDLGGFDVQVEADYTRFRIPLTSTGFQQPQGERMFVQPTISYPIVRPGWYATPKVIFNATQYQMEPQSNTPTAQNNFSRTVPTFSFDSGMTFERDAPTMSRVFGVNYLQTLEPRLFYVYTPFRDQSQFPLFDTVQSDFGYGQIFSENPFTGYDRVADNNKLTAGLTTRLIEADTGIERFRGTIAQRYDFSGQRVQINGTLPDPKAGSSDLLAATTIQLFRGYYLDAGIQYNPDSEHINYSNLAFAWRPEPRKLLNVGYRYRRATSVTDNTAIDQFEISGQWPITQRAYGIGRFAFDRNANQMVDALAGLEYAADCWVGRVVYQRYRNTTQGYTGRIFLQVEFRGLSKIGSNPLDILRLNVPGYEPVTAKPVPTTQFDHYE.

2 disordered regions span residues 1-26 and 54-79; these read MTEQRRSPNKRANKPPALSGLSSRTG and SAVPDIDQTESVVETAPEVPLAPPVS. A signal peptide spans 1–49; that stretch reads MTEQRRSPNKRANKPPALSGLSSRTGRLPASALRPLVLAMAGLSVGAHA.

This sequence belongs to the LptD family. As to quaternary structure, component of the lipopolysaccharide transport and assembly complex. Interacts with LptE and LptA.

It is found in the cell outer membrane. In terms of biological role, together with LptE, is involved in the assembly of lipopolysaccharide (LPS) at the surface of the outer membrane. In Cupriavidus pinatubonensis (strain JMP 134 / LMG 1197) (Cupriavidus necator (strain JMP 134)), this protein is LPS-assembly protein LptD.